The primary structure comprises 211 residues: Protein-methionine-sulfoxide reductase heme-binding subunit MsrQ (211 aa).

The next 5 helical transmembrane spans lie at 17–37 (LAGLLPFLWLVWAINHGGLGA), 54–74 (FLLATLLITPLARYVKQPLLI), 82–102 (LWCFAWATLHLTSYALLELGV), 116–136 (PYLTLGIISWVILLALAFTST), and 153–173 (FVYLVAILAPIHYLWSVKIIS).

The protein belongs to the MsrQ family. In terms of assembly, heterodimer of a catalytic subunit (MsrP) and a heme-binding subunit (MsrQ). It depends on FMN as a cofactor. Heme b serves as cofactor.

Its subcellular location is the cell inner membrane. Functionally, part of the MsrPQ system that repairs oxidized periplasmic proteins containing methionine sulfoxide residues (Met-O), using respiratory chain electrons. Thus protects these proteins from oxidative-stress damage caused by reactive species of oxygen and chlorine generated by the host defense mechanisms. MsrPQ is essential for the maintenance of envelope integrity under bleach stress, rescuing a wide series of structurally unrelated periplasmic proteins from methionine oxidation, including the primary periplasmic chaperone SurA and the lipoprotein Pal. MsrQ provides electrons for reduction to the reductase catalytic subunit MsrP, using the quinone pool of the respiratory chain. The chain is Protein-methionine-sulfoxide reductase heme-binding subunit MsrQ from Escherichia coli (strain SMS-3-5 / SECEC).